Reading from the N-terminus, the 430-residue chain is Probable acetate kinase (430 aa).

Asparagine 12 contributes to the Mg(2+) binding site. Residue lysine 19 participates in ATP binding. Residue arginine 100 participates in substrate binding. Catalysis depends on aspartate 159, which acts as the Proton donor/acceptor. 220–224 (HLGSG) contributes to the ATP binding site. Glutamate 416 is a binding site for Mg(2+).

This sequence belongs to the acetokinase family. Mg(2+) is required as a cofactor.

The catalysed reaction is acetate + ATP = acetyl phosphate + ADP. Its pathway is metabolic intermediate biosynthesis; acetyl-CoA biosynthesis; acetyl-CoA from acetate: step 1/2. The chain is Probable acetate kinase from Cryptococcus neoformans var. neoformans serotype D (strain B-3501A) (Filobasidiella neoformans).